Here is a 305-residue protein sequence, read N- to C-terminus: Oxygen-dependent coproporphyrinogen-III oxidase (305 aa).

A substrate-binding site is contributed by Ser99. A divalent metal cation is bound by residues His103 and His113. His113 functions as the Proton donor in the catalytic mechanism. 115-117 (NVR) contacts substrate. His152 and His182 together coordinate a divalent metal cation. Residues 247–282 (YVEFNLVLDRGTLFGLQTGGRTESILMSMPPLARWE) are important for dimerization. Residue 265-267 (GGR) coordinates substrate.

It belongs to the aerobic coproporphyrinogen-III oxidase family. In terms of assembly, homodimer. A divalent metal cation serves as cofactor.

Its subcellular location is the cytoplasm. The enzyme catalyses coproporphyrinogen III + O2 + 2 H(+) = protoporphyrinogen IX + 2 CO2 + 2 H2O. The protein operates within porphyrin-containing compound metabolism; protoporphyrin-IX biosynthesis; protoporphyrinogen-IX from coproporphyrinogen-III (O2 route): step 1/1. Its function is as follows. Involved in the heme biosynthesis. Catalyzes the aerobic oxidative decarboxylation of propionate groups of rings A and B of coproporphyrinogen-III to yield the vinyl groups in protoporphyrinogen-IX. The chain is Oxygen-dependent coproporphyrinogen-III oxidase from Vibrio cholerae serotype O1 (strain M66-2).